The sequence spans 362 residues: Probable dual-specificity RNA methyltransferase RlmN (362 aa).

Residue Glu-105 is the Proton acceptor of the active site. One can recognise a Radical SAM core domain in the interval 111–344 (HEYGNSICVT…VTIRREQGHD (234 aa)). Cysteines 118 and 349 form a disulfide. [4Fe-4S] cluster-binding residues include Cys-125, Cys-129, and Cys-132. Residues 175–176 (GE), Ser-207, 230–232 (SLH), and Asn-306 each bind S-adenosyl-L-methionine. Catalysis depends on Cys-349, which acts as the S-methylcysteine intermediate.

Belongs to the radical SAM superfamily. RlmN family. [4Fe-4S] cluster serves as cofactor.

It localises to the cytoplasm. It catalyses the reaction adenosine(2503) in 23S rRNA + 2 reduced [2Fe-2S]-[ferredoxin] + 2 S-adenosyl-L-methionine = 2-methyladenosine(2503) in 23S rRNA + 5'-deoxyadenosine + L-methionine + 2 oxidized [2Fe-2S]-[ferredoxin] + S-adenosyl-L-homocysteine. The enzyme catalyses adenosine(37) in tRNA + 2 reduced [2Fe-2S]-[ferredoxin] + 2 S-adenosyl-L-methionine = 2-methyladenosine(37) in tRNA + 5'-deoxyadenosine + L-methionine + 2 oxidized [2Fe-2S]-[ferredoxin] + S-adenosyl-L-homocysteine. In terms of biological role, specifically methylates position 2 of adenine 2503 in 23S rRNA and position 2 of adenine 37 in tRNAs. The chain is Probable dual-specificity RNA methyltransferase RlmN from Bacillus cereus (strain G9842).